The sequence spans 304 residues: Acetyl-coenzyme A carboxylase carboxyl transferase subunit beta (304 aa).

Residues Val-23–Val-292 enclose the CoA carboxyltransferase N-terminal domain. Positions 27, 30, 46, and 49 each coordinate Zn(2+). The C4-type zinc-finger motif lies at Cys-27–Cys-49. A disordered region spans residues Asn-284–Ala-304. Residues Pro-295–Ala-304 are compositionally biased toward pro residues.

This sequence belongs to the AccD/PCCB family. Acetyl-CoA carboxylase is a heterohexamer composed of biotin carboxyl carrier protein (AccB), biotin carboxylase (AccC) and two subunits each of ACCase subunit alpha (AccA) and ACCase subunit beta (AccD). Zn(2+) serves as cofactor.

It localises to the cytoplasm. It catalyses the reaction N(6)-carboxybiotinyl-L-lysyl-[protein] + acetyl-CoA = N(6)-biotinyl-L-lysyl-[protein] + malonyl-CoA. The protein operates within lipid metabolism; malonyl-CoA biosynthesis; malonyl-CoA from acetyl-CoA: step 1/1. In terms of biological role, component of the acetyl coenzyme A carboxylase (ACC) complex. Biotin carboxylase (BC) catalyzes the carboxylation of biotin on its carrier protein (BCCP) and then the CO(2) group is transferred by the transcarboxylase to acetyl-CoA to form malonyl-CoA. This chain is Acetyl-coenzyme A carboxylase carboxyl transferase subunit beta, found in Shigella flexneri.